A 488-amino-acid polypeptide reads, in one-letter code: Secreted triacylglycerol lipase LIP1 (488 aa).

An N-terminal signal peptide occupies residues 1 to 26 (MPSMLSLFYLAQSLFLLLLFPLYGHA). Cys-119 and Cys-288 are disulfide-bonded. N-linked (GlcNAc...) asparagine glycosylation occurs at Asn-183. Residue Ser-201 is the Nucleophile of the active site. Asn-316 is a glycosylation site (N-linked (GlcNAc...) asparagine). Catalysis depends on residues Asp-348 and His-382. The tract at residues 461–488 (SKSGSSLKSHSHSQTHKHRKDVSTISNA) is disordered. A compositionally biased stretch (basic residues) spans 469 to 480 (SHSHSQTHKHRK).

The protein belongs to the AB hydrolase superfamily. Lipase family. Class Lip subfamily.

Its subcellular location is the secreted. It catalyses the reaction a triacylglycerol + H2O = a diacylglycerol + a fatty acid + H(+). The catalysed reaction is a monoacylglycerol + H2O = glycerol + a fatty acid + H(+). The enzyme catalyses a diacylglycerol + H2O = a monoacylglycerol + a fatty acid + H(+). With respect to regulation, inhibited by different metal ions including Fe(2+), Fe(3+), Cu(2+), and Zn(2+). The monovalent ions Na(+) and K(+) exhibit less dramatic inhibition. In terms of biological role, secreted lipase that releases free fatty acids from monoacylglycerol and triacylglycerol but has no phospholipase or lysophospholipase activities. Has minor esterase activity. Due to an absence of fatty acid synthase genes in Malassezia species, secretory lipases are essential for the yeast to generate free fatty acids from degradation of sebum and assimilate them as lipid sources for growth. Plays important roles not only in lipid metabolism but also in the immune response of host cells and pathogenesis. Hydrolyzes lipids, such as Tween 20, 40 and 80, with Tween 80 being the best substrate. The chain is Secreted triacylglycerol lipase LIP1 from Malassezia furfur (Pityriasis versicolor infection agent).